Reading from the N-terminus, the 219-residue chain is Probable cutinase 4 (219 aa).

An N-terminal signal peptide occupies residues Met1–Ala17. Cystine bridges form between Cys41–Cys120 and Cys67–Cys81. N-linked (GlcNAc...) asparagine glycosylation occurs at Asn99. Ser131 acts as the Nucleophile in catalysis. Cysteines 182 and 189 form a disulfide. Asp186 is a catalytic residue. His199 (proton donor/acceptor) is an active-site residue.

It belongs to the cutinase family.

The protein resides in the secreted. It carries out the reaction cutin + H2O = cutin monomers.. Functionally, catalyzes the hydrolysis of complex carboxylic polyesters found in the cell wall of plants. Degrades cutin, a macromolecule that forms the structure of the plant cuticle. This Aspergillus terreus (strain NIH 2624 / FGSC A1156) protein is Probable cutinase 4.